The following is a 49-amino-acid chain: Osteocalcin (49 aa).

Gln1 is subject to Pyrrolidone carboxylic acid. A Gla domain is found at 1-47 (QLINGQGAPAPYPDPLEPKREVCELNPDCDELADQVGLQDAYQRFYG). Pro9 carries the 4-hydroxyproline modification. Positions 17, 21, 24, and 30 each coordinate Ca(2+). Glu17, Glu21, and Glu24 each carry 4-carboxyglutamate. Cysteines 23 and 29 form a disulfide.

The protein belongs to the osteocalcin/matrix Gla protein family. Post-translationally, gamma-carboxyglutamate residues are formed by vitamin K dependent carboxylation by GGCX. These residues are essential for the binding of calcium. Decarboxylation promotes the hormone activity.

It is found in the secreted. Functionally, the carboxylated form is one of the main organic components of the bone matrix, which constitutes 1-2% of the total bone protein: it acts as a negative regulator of bone formation and is required to limit bone formation without impairing bone resorption or mineralization. The carboxylated form binds strongly to apatite and calcium. In terms of biological role, the uncarboxylated form acts as a hormone secreted by osteoblasts, which regulates different cellular processes, such as energy metabolism, male fertility and brain development. Regulates of energy metabolism by acting as a hormone favoring pancreatic beta-cell proliferation, insulin secretion and sensitivity and energy expenditure. Uncarboxylated osteocalcin hormone also promotes testosterone production in the testes: acts as a ligand for G protein-coupled receptor GPRC6A at the surface of Leydig cells, initiating a signaling response that promotes the expression of enzymes required for testosterone synthesis in a CREB-dependent manner. Also acts as a regulator of brain development: osteocalcin hormone crosses the blood-brain barrier and acts as a ligand for GPR158 on neurons, initiating a signaling response that prevents neuronal apoptosis in the hippocampus, favors the synthesis of all monoamine neurotransmitters and inhibits that of gamma-aminobutyric acid (GABA). Osteocalcin also crosses the placenta during pregnancy and maternal osteocalcin is required for fetal brain development. The sequence is that of Osteocalcin (BGLAP) from Oryctolagus cuniculus (Rabbit).